Reading from the N-terminus, the 1183-residue chain is DNA-directed RNA polymerase subunit beta (1183 aa).

This sequence belongs to the RNA polymerase beta chain family. The RNAP catalytic core consists of 2 alpha, 1 beta, 1 beta' and 1 omega subunit. When a sigma factor is associated with the core the holoenzyme is formed, which can initiate transcription.

It catalyses the reaction RNA(n) + a ribonucleoside 5'-triphosphate = RNA(n+1) + diphosphate. In terms of biological role, DNA-dependent RNA polymerase catalyzes the transcription of DNA into RNA using the four ribonucleoside triphosphates as substrates. The polypeptide is DNA-directed RNA polymerase subunit beta (Staphylococcus aureus (strain JH9)).